A 217-amino-acid chain; its full sequence is Tectonin-1 (217 aa).

6 tandem repeats follow at residues valine 2–glycine 37, histidine 38–asparagine 74, asparagine 75–histidine 111, asparagine 112–glycine 146, serine 147–glycine 182, and lysine 183–leucine 217. The segment at valine 2–leucine 217 is 6 X approximate tandem repeats.

This sequence belongs to the tectonin family.

The protein localises to the cell surface. It localises to the cytoplasmic vesicle membrane. In terms of biological role, probably involved in bacterial recognition. May be a lectin that function as part of a transmembrane signaling complex during phagocytosis. The polypeptide is Tectonin-1 (TECA) (Physarum polycephalum (Slime mold)).